The primary structure comprises 28 residues: Conotoxin as14b (28 aa).

2 cysteine pairs are disulfide-bonded: cysteine 7–cysteine 27 and cysteine 11–cysteine 23.

It belongs to the conotoxin L superfamily. Expressed by the venom duct.

The protein resides in the secreted. Functionally, in vivo, intracranial injection elicits scratching and grooming activity in mice, and causes body and rear limb extension and tail curling immediately upon injection. This is Conotoxin as14b from Conus cancellatus (Cancellate cone).